Here is a 384-residue protein sequence, read N- to C-terminus: Dehydrogenase ALT3 (384 aa).

This sequence belongs to the iron-containing alcohol dehydrogenase family. Fe cation serves as cofactor.

Its pathway is mycotoxin biosynthesis. In terms of biological role, dehydrogenase; part of the gene cluster that mediates the biosynthesis of the host-selective toxins (HSTs) AAL-toxins, sphinganine-analog mycotoxins responsible for Alternaria stem canker on tomato by the tomato pathotype. The biosynthesis starts with the polyketide synthase ALT1-catalyzed C-16 carbon chain assembly from one starter acetyl-CoA unit with malonyl-CoA extender units. ALT1 also selectively transfers methyl groups at the first and the third cycle of chain elongation for AAL toxin. The C-16 polyketide chain is released from the enzyme by a nucleophilic attack of a carbanion, which is derived from R-carbon of glycin by decarboxylation, on the carbonyl carbon of polyketide acyl chain. This step is probably catalyzed by a pyridoxal 5'-phosphate-dependent aminoacyl transferase ALT4. The respective functions of the other enzymes encoded by the cluster have still to be elucidated. The sphingosine N-acyltransferase-like protein ALT7 seems not to act as a resistance/self-tolerance factor against the toxin in the toxin biosynthetic gene cluster, contrary to what is expected. The sequence is that of Dehydrogenase ALT3 from Alternaria alternata (Alternaria rot fungus).